The primary structure comprises 584 residues: Potassium-transporting ATPase potassium-binding subunit (584 aa).

Helical transmembrane passes span 8–28 (FLVLIGVILALLLIPTGEFMF), 65–85 (SFAVAMMIFSVIGIVFVFILQ), 139–159 (VQNFMSAAVGMVVLVAFIYGF), 172–192 (VLLLRSIWILLPLSFVIALVL), 262–282 (FTDLVEIVAILLIPVSLCFMF), 292–312 (GIAILIAMMILFVPLLGLGIW), 398–418 (GLYCMLVFVIIAMFIAGLMVG), 440–460 (ILIPIFLILIGTAIAVSITAG), 507–527 (MFVGRYAIAIITLALAGAFVA), and 544–564 (LFIIWVVFTILIIGALSFLPA).

Belongs to the KdpA family. In terms of assembly, the system is composed of three essential subunits: KdpA, KdpB and KdpC.

The protein localises to the cell membrane. Part of the high-affinity ATP-driven potassium transport (or Kdp) system, which catalyzes the hydrolysis of ATP coupled with the electrogenic transport of potassium into the cytoplasm. This subunit binds the extracellular potassium ions and delivers the ions to the membrane domain of KdpB through an intramembrane tunnel. The polypeptide is Potassium-transporting ATPase potassium-binding subunit (Methanoregula boonei (strain DSM 21154 / JCM 14090 / 6A8)).